We begin with the raw amino-acid sequence, 510 residues long: Probable cytochrome P450 517A2 (510 aa).

The helical transmembrane segment at 1-21 (MRILIIIILIIIVFLVKDTIK) threads the bilayer. Residue Cys450 coordinates heme.

This sequence belongs to the cytochrome P450 family. Heme is required as a cofactor.

It localises to the membrane. This is Probable cytochrome P450 517A2 (cyp517A2) from Dictyostelium discoideum (Social amoeba).